The primary structure comprises 637 residues: Chaperone protein dnaK2 (637 aa).

Thr197 bears the Phosphothreonine; by autocatalysis mark. The interval 602 to 637 (AAAGGAAPGGDAGASAASGGGDASDDVIDAEFTETK) is disordered. The span at 603–623 (AAGGAAPGGDAGASAASGGGD) shows a compositional bias: gly residues. A compositionally biased stretch (acidic residues) spans 624-637 (ASDDVIDAEFTETK).

It belongs to the heat shock protein 70 family.

Its function is as follows. Acts as a chaperone. This Parasynechococcus marenigrum (strain WH8102) protein is Chaperone protein dnaK2 (dnaK2).